The primary structure comprises 151 residues: Ribosome maturation factor RimP (151 aa).

Belongs to the RimP family.

The protein resides in the cytoplasm. Its function is as follows. Required for maturation of 30S ribosomal subunits. In Hydrogenovibrio crunogenus (strain DSM 25203 / XCL-2) (Thiomicrospira crunogena), this protein is Ribosome maturation factor RimP.